We begin with the raw amino-acid sequence, 890 residues long: Alanine--tRNA ligase (890 aa).

Residues His-565, His-569, Cys-677, and His-681 each contribute to the Zn(2+) site.

The protein belongs to the class-II aminoacyl-tRNA synthetase family. The cofactor is Zn(2+).

The protein resides in the cytoplasm. The catalysed reaction is tRNA(Ala) + L-alanine + ATP = L-alanyl-tRNA(Ala) + AMP + diphosphate. Functionally, catalyzes the attachment of alanine to tRNA(Ala) in a two-step reaction: alanine is first activated by ATP to form Ala-AMP and then transferred to the acceptor end of tRNA(Ala). Also edits incorrectly charged Ser-tRNA(Ala) and Gly-tRNA(Ala) via its editing domain. This is Alanine--tRNA ligase from Zymomonas mobilis subsp. mobilis (strain ATCC 31821 / ZM4 / CP4).